The following is a 436-amino-acid chain: GTPase Der (436 aa).

EngA-type G domains are found at residues 4–167 (PTIA…PNEE) and 175–351 (IKFS…QSQN). Residues 10–17 (GRPNVGKS), 57–61 (DTGGI), 119–122 (NKVD), 181–188 (GRPNVGKS), 229–233 (DTAGM), and 294–297 (NKWD) each bind GTP. The region spanning 352–436 (TRIPSAVLND…PIHLIARKRK (85 aa)) is the KH-like domain.

It belongs to the TRAFAC class TrmE-Era-EngA-EngB-Septin-like GTPase superfamily. EngA (Der) GTPase family. In terms of assembly, associates with the 50S ribosomal subunit.

Its function is as follows. GTPase that plays an essential role in the late steps of ribosome biogenesis. This Streptococcus sanguinis (strain SK36) protein is GTPase Der.